The chain runs to 185 residues: Elongation factor P (185 aa).

Belongs to the elongation factor P family.

The protein localises to the cytoplasm. Its pathway is protein biosynthesis; polypeptide chain elongation. In terms of biological role, involved in peptide bond synthesis. Stimulates efficient translation and peptide-bond synthesis on native or reconstituted 70S ribosomes in vitro. Probably functions indirectly by altering the affinity of the ribosome for aminoacyl-tRNA, thus increasing their reactivity as acceptors for peptidyl transferase. The protein is Elongation factor P of Streptococcus uberis (strain ATCC BAA-854 / 0140J).